A 160-amino-acid chain; its full sequence is SsrA-binding protein (160 aa).

Positions 136-160 are disordered; it reads KRDTVRERDSNRELQRAVRNKGKED.

The protein belongs to the SmpB family.

It localises to the cytoplasm. Functionally, required for rescue of stalled ribosomes mediated by trans-translation. Binds to transfer-messenger RNA (tmRNA), required for stable association of tmRNA with ribosomes. tmRNA and SmpB together mimic tRNA shape, replacing the anticodon stem-loop with SmpB. tmRNA is encoded by the ssrA gene; the 2 termini fold to resemble tRNA(Ala) and it encodes a 'tag peptide', a short internal open reading frame. During trans-translation Ala-aminoacylated tmRNA acts like a tRNA, entering the A-site of stalled ribosomes, displacing the stalled mRNA. The ribosome then switches to translate the ORF on the tmRNA; the nascent peptide is terminated with the 'tag peptide' encoded by the tmRNA and targeted for degradation. The ribosome is freed to recommence translation, which seems to be the essential function of trans-translation. The chain is SsrA-binding protein from Pseudomonas putida (strain W619).